A 144-amino-acid polypeptide reads, in one-letter code: UPF0102 protein Veis_0630 (144 aa).

The disordered stretch occupies residues 11 to 31 (PPAAAPGPAPAPASAATASER).

The protein belongs to the UPF0102 family.

In Verminephrobacter eiseniae (strain EF01-2), this protein is UPF0102 protein Veis_0630.